The chain runs to 78 residues: uncharacterized protein (78 aa).

This is an uncharacterized protein from Saccharomyces cerevisiae (strain ATCC 204508 / S288c) (Baker's yeast).